The following is a 1150-amino-acid chain: MAQFGGQKNPPWATQFTATAVSQPAALGVQQPSLLGASPTIYTQQTALAAAGLTTQTPANYQLTQTAALQQQAAAAAAALQQQYSQPQQALYSVQQQLQQPQQTLLTQPAVALPTSLSLSTPQPTAQITVSYPTPRSSQQQTQPQKQRVFTGVVTKLHDTFGFVDEDVFFQLSAVKGKTPQVGDRVLVEATYNPNMPFKWNAQRIQTLPNQNQSQTQPLLKTPPAVLQPIAPQTTFGVQTQPQPQSLLQAQISAASITPLLQTQPQPLLQQPQQKAGLLQPPVRIVSQPQPARRLDPPSRFSGRNDRGDQVPNRKDDRSRERERERRRSRERSPQRKRSRERSPRRERERSPRRVRRVVPRYTVQFSKFSLDCPSCDMMELRRRYQNLYIPSDFFDAQFTWVDAFPLSRPFQLGNYCNFYVMHREVESLEKNMAILDPPDADHLYSAKVMLMASPSMEDLYHKSCALAEDPQELRDGFQHPARLVKFLVGMKGKDEAMAIGGHWSPSLDGPDPEKDPSVLIKTAIRCCKALTGIDLSVCTQWYRFAEIRYHRPEETHKGRTVPAHVETVVLFFPDVWHCLPTRSEWETLSRGYKQQLVEKLQGERKEADGEQDEEEKDDGEAKEISTPTHWSKLDPKTMKVNDLRKELESRALSSKGLKSQLIARLTKQLKVEEQKEEQKELEKSEKEEDEDDDRKSEDDKEEEERKRQEEIERQRRERRYILPDEPAIIVHPNWAAKSGKFDCSIMSLSVLLDYRLEDNKEHSFEVSLFAELFNEMLQRDFGVRIYKSLLSLPEKEDKKEKDKKSKKDERKDKKEERDDETDEPKPKRRKSGDDKDKKEDRDERKKEDKRKDDSKDDDETEEDNNQDEYDPMEAEEAEDEEDDRDEEEMTKRDDKRDINRYCKERPSKDKEKEKTQMITINRDLLMAFVYFDQSHCGYLLEKDLEEILYTLGLHLSRAQVKKLLNKVVLRESCFYRKLTDTSKDEENHEESESLQEDMLGNRLLLPTPTVKQESKDVEENVGLIVYNGAMVDVGSLLQKLEKSEKVRAEVEQKLQLLEEKTDEDEKTILNLENSNKSLSGELREVKKDLSQLQENLKISENMNLQFENQMNKTIRNLSTVMDEIHTVLKKDNVKNEDKDQKSKENGASV.

The segment at 1-249 (MAQFGGQKNP…TQPQPQSLLQ (249 aa)) is interaction with AR. 2 disordered regions span residues 124–146 (PTAQ…QPQK) and 285–354 (IVSQ…SPRR). Low complexity predominate over residues 134–146 (TPRSSQQQTQPQK). Positions 203–660 (QRIQTLPNQN…RALSSKGLKS (458 aa)) are interaction with GATA2. 2 stretches are compositionally biased toward basic and acidic residues: residues 293 to 334 (RRLD…ERSP) and 341 to 352 (ERSPRRERERSP). The residue at position 456 (Ser456) is a Phosphoserine. Residues 594-618 (KQQLVEKLQGERKEADGEQDEEEKD) adopt a coiled-coil conformation. The tract at residues 600-638 (KLQGERKEADGEQDEEEKDDGEAKEISTPTHWSKLDPKT) is disordered. The segment covering 610–621 (GEQDEEEKDDGE) has biased composition (acidic residues). A Phosphothreonine modification is found at Thr627. Positions 636-670 (PKTMKVNDLRKELESRALSSKGLKSQLIARLTKQL) constitute an SAP domain. Lys637 is covalently cross-linked (Glycyl lysine isopeptide (Lys-Gly) (interchain with G-Cter in ubiquitin)). The segment at 643–1150 (DLRKELESRA…QKSKENGASV (508 aa)) is interaction with GATA1. A Phosphothreonine modification is found at Thr667. 4 stretches are compositionally biased toward basic and acidic residues: residues 673 to 687 (EEQK…KSEK), 694 to 713 (DRKS…EEIE), 796 to 817 (KEDK…KKEE), and 832 to 855 (SGDD…KDDS). Disordered stretches follow at residues 673–713 (EEQK…EEIE) and 796–915 (KEDK…EKEK). Phosphoserine is present on residues Ser685 and Ser697. The span at 856–889 (KDDDETEEDNNQDEYDPMEAEEAEDEEDDRDEEE) shows a compositional bias: acidic residues. Thr861 is modified (phosphothreonine). A compositionally biased stretch (basic and acidic residues) spans 890–915 (MTKRDDKRDINRYCKERPSKDKEKEK). Lys1012 is covalently cross-linked (Glycyl lysine isopeptide (Lys-Gly) (interchain with G-Cter in SUMO1); alternate). Lys1012 is covalently cross-linked (Glycyl lysine isopeptide (Lys-Gly) (interchain with G-Cter in SUMO2); alternate). The stretch at 1033-1114 (DVGSLLQKLE…LQFENQMNKT (82 aa)) forms a coiled coil. Residues Lys1067 and Lys1135 each participate in a glycyl lysine isopeptide (Lys-Gly) (interchain with G-Cter in SUMO2) cross-link.

In terms of assembly, directly interacts with ESR1, NR3C1 and p53/TP53. Interacts (via N-terminus) with CALCOCO1. Interacts with MED1. Interacts with GATA1. Interacts with AR and GATA2. In terms of tissue distribution, expressed in various epithelial cancer cell lines, including breast, colon, prostate, pancreatic and leukemia. Expression is regulated by growth factors.

The protein resides in the cytoplasm. It is found in the perinuclear region. In terms of biological role, associates with components of the Mediator and p160 coactivator complexes that play a role as intermediaries transducing regulatory signals from upstream transcriptional activator proteins to basal transcription machinery at the core promoter. Recruited to endogenous nuclear receptor target genes in response to the appropriate hormone. Also functions as a p53 coactivator. May thus play an important role in transcriptional regulation. May be involved in apoptosis signaling in the presence of the reinoid CD437. Apoptosis induction involves sequestration of 14-3-3 protein(s) and mediated altered expression of multiple cell cycle regulatory genes including MYC, CCNB1 and CDKN1A. Plays a role in cell cycle progression and/or cell proliferation. In association with CALCOCO1 enhances GATA1- and MED1-mediated transcriptional activation from the gamma-globin promoter during erythroid differentiation of K562 erythroleukemia cells. Can act as a both a coactivator and corepressor of AR-mediated transcription. Contributes to chromatin looping and AR transcription complex assembly by stabilizing AR-GATA2 association on chromatin and facilitating MED1 and RNA polymerase II recruitment to AR-binding sites. May play an important role in the growth and tumorigenesis of prostate cancer cells. The chain is Cell division cycle and apoptosis regulator protein 1 (CCAR1) from Homo sapiens (Human).